Here is a 112-residue protein sequence, read N- to C-terminus: T cell receptor alpha variable 9-1 (112 aa).

Positions 1–20 (MNSSPGPAIALFLMFGGING) are cleaved as a signal peptide. Residues 21 to 112 (DSVVQTEGQV…DSAVYFCALS (92 aa)) enclose the Ig-like domain. The N-linked (GlcNAc...) asparagine glycan is linked to Asn41. A disulfide bridge links Cys42 with Cys109.

In terms of assembly, alpha-beta TR is a heterodimer composed of an alpha and beta chain; disulfide-linked. The alpha-beta TR is associated with the transmembrane signaling CD3 coreceptor proteins to form the TR-CD3 (TcR or TCR). The assembly of alpha-beta TR heterodimers with CD3 occurs in the endoplasmic reticulum where a single alpha-beta TR heterodimer associates with one CD3D-CD3E heterodimer, one CD3G-CD3E heterodimer and one CD247 homodimer forming a stable octameric structure. CD3D-CD3E and CD3G-CD3E heterodimers preferentially associate with TR alpha and TR beta chains, respectively. The association of the CD247 homodimer is the last step of TcR assembly in the endoplasmic reticulum and is required for transport to the cell surface.

Its subcellular location is the cell membrane. Functionally, v region of the variable domain of T cell receptor (TR) alpha chain that participates in the antigen recognition. Alpha-beta T cell receptors are antigen specific receptors which are essential to the immune response and are present on the cell surface of T lymphocytes. Recognize peptide-major histocompatibility (MH) (pMH) complexes that are displayed by antigen presenting cells (APC), a prerequisite for efficient T cell adaptive immunity against pathogens. Binding of alpha-beta TR to pMH complex initiates TR-CD3 clustering on the cell surface and intracellular activation of LCK that phosphorylates the ITAM motifs of CD3G, CD3D, CD3E and CD247 enabling the recruitment of ZAP70. In turn ZAP70 phosphorylates LAT, which recruits numerous signaling molecules to form the LAT signalosome. The LAT signalosome propagates signal branching to three major signaling pathways, the calcium, the mitogen-activated protein kinase (MAPK) kinase and the nuclear factor NF-kappa-B (NF-kB) pathways, leading to the mobilization of transcription factors that are critical for gene expression and essential for T cell growth and differentiation. The T cell repertoire is generated in the thymus, by V-(D)-J rearrangement. This repertoire is then shaped by intrathymic selection events to generate a peripheral T cell pool of self-MH restricted, non-autoaggressive T cells. Post-thymic interaction of alpha-beta TR with the pMH complexes shapes TR structural and functional avidity. The protein is T cell receptor alpha variable 9-1 of Homo sapiens (Human).